The chain runs to 347 residues: MSVMFDPQAAIYPFPPKPTPLNDDEKQFYREKIKRLLKERNAVMVAHYYTDPEIQQLAEETGGCISDSLEMARFGAKHAASTLLVSGVRFMGETAKILSPEKNILMPTLAAECSLDLGCPIDEFSAFCDAHPDRTVVVYANTSAAVKARADWVVTSSIAVELIEHLDSLGEKIIWAPDRHLGNYVQKQTGADVLCWQGACIVHDEFKTQALTRLKKIYPYAALLVHPESPQSIVEMADAVGSTSQLIKAAKTLPHRQLIVATDRGIFYKMQQAVPEKELLEAPTAGEGATCRSCAHCPWMAMNGLKAIAEGLEQGGAAHEIQVDAALREGALLPLNRMLDFVATLRA.

Residues H47 and S68 each coordinate iminosuccinate. Residue C113 participates in [4Fe-4S] cluster binding. Iminosuccinate contacts are provided by residues 139-141 (YAN) and S156. Position 200 (C200) interacts with [4Fe-4S] cluster. Iminosuccinate is bound by residues 226 to 228 (HPE) and T243. C297 is a [4Fe-4S] cluster binding site.

This sequence belongs to the quinolinate synthase family. Type 1 subfamily. [4Fe-4S] cluster serves as cofactor.

It localises to the cytoplasm. It catalyses the reaction iminosuccinate + dihydroxyacetone phosphate = quinolinate + phosphate + 2 H2O + H(+). It participates in cofactor biosynthesis; NAD(+) biosynthesis; quinolinate from iminoaspartate: step 1/1. Its function is as follows. Catalyzes the condensation of iminoaspartate with dihydroxyacetone phosphate to form quinolinate. This chain is Quinolinate synthase, found in Salmonella gallinarum (strain 287/91 / NCTC 13346).